A 576-amino-acid chain; its full sequence is MESFDNIYLDLSKQPGKCKLAESGLGWKPSGEGETFTLDSSNVGAAQWSRAAKGFELKILSRSSGVIQLDGFDQEDFERLSKAFKIWYGINVESREHALRGWNWGKAEFTKAELSFNVQNRPAFEVPYSEISNTNLAGKNEVAVELALNTDGADANAQPAGSTKNRGRKAASGPDELVEMRFYIPGTVMKTEKGIKEENGKEENGEEEEEGEEQNAANLFYEMLMEKAEIGDVAGDTFATFLDVLHLTPRGRFDIDMYESSFRLRGKTYDYKIQYSSIKKFFLLPKNDDTHTLIVLGLDPPLRQGQTRYPFLVMQLKLDEEISLELNMTDELMETRYKDKLEPRYEEPIHQVVTKIFRGLSGKKVIMPSKDFVSHHGHSGVKCSIKANEGLLYFLDKSLIFVPKPATYIQVENIAIITMSRVGGAVSASRTFDITVSLKAGMGEHQFSNINREEQQPLEEFFKAKNIRFKNEMSDDAGALLAAALDNDVMGSSDDEGVRADRGSADEDEESIDEDFQAESESDVAEEYDSAHESSGSGSDAEMNDASDGGGDDDDDDEDVDMSEEERPKKKSKVGK.

Disordered regions lie at residues 153–172, 193–213, and 490–576; these read ADAN…KAAS, KGIK…EGEE, and MGSS…KVGK. Positions 193–203 are enriched in basic and acidic residues; that stretch reads KGIKEENGKEE. Acidic residues predominate over residues 204-213; it reads NGEEEEEGEE. Positions 496–505 are enriched in basic and acidic residues; sequence EGVRADRGSA. Acidic residues-rich tracts occupy residues 506–528 and 542–564; these read DEDE…AEEY and EMND…DMSE.

Belongs to the SSRP1 family. As to quaternary structure, forms a stable heterodimer with spt16. The spt16-pob3 dimer weakly associates with multiple molecules of nhp6 to form the FACT complex.

The protein localises to the nucleus. Its subcellular location is the chromosome. Its function is as follows. Component of the FACT complex, a general chromatin factor that acts to reorganize nucleosomes. The FACT complex is involved in multiple processes that require DNA as a template such as mRNA elongation, DNA replication and DNA repair. During transcription elongation the FACT complex acts as a histone chaperone that both destabilizes and restores nucleosomal structure. It facilitates the passage of RNA polymerase II and transcription by promoting the dissociation of one histone H2A-H2B dimer from the nucleosome, then subsequently promotes the reestablishment of the nucleosome following the passage of RNA polymerase II. The sequence is that of FACT complex subunit pob3 (pob3) from Aspergillus oryzae (strain ATCC 42149 / RIB 40) (Yellow koji mold).